A 302-amino-acid polypeptide reads, in one-letter code: 1,2-dihydroxynaphthalene dioxygenase (302 aa).

VOC domains lie at 9–124 (ELGY…IFWG) and 149–270 (GLGH…PGWR). A Fe cation-binding site is contributed by His-152. Residues His-152, 199-200 (DH), His-215, and Tyr-256 contribute to the substrate site. Residue His-215 participates in Fe cation binding. Position 266 (Glu-266) interacts with Fe cation.

The protein belongs to the extradiol ring-cleavage dioxygenase family. Fe(2+) is required as a cofactor.

It catalyses the reaction naphthalene-1,2-diol + O2 = 2-hydroxychromene-2-carboxylate + H(+). It functions in the pathway aromatic compound metabolism; naphthalene degradation. Inhibited by bathophenanthroline sulfonate, o-phenanthroline, 8-hydroxyquinoline, 2,2'-dipyridyl and p-chlormercuribenzoate. Also inhibited by Hg(2+), Cu(2+), Co(2+) and Fe(3+) ions. In terms of biological role, involved in the naphthalene catabolic pathway. Catalyzes the meta-cleavage of 1,2-dihydroxynaphthalene (1,2-DHN) to yield 2-hydroxychromene-2-carboxylic acid. Can also cleave 3-methylcatechol and 4-methylcatechol. This is 1,2-dihydroxynaphthalene dioxygenase (nahC) from Pseudomonas putida (Arthrobacter siderocapsulatus).